We begin with the raw amino-acid sequence, 920 residues long: MKIEKLMALYGENGALLEELYNQYKLNPETLDKEWKSFFQEVDTNGLANGSGYTNGNGKSAVATSFTDAQAASIREMGIINLLNAYRRQGHLAAKLDPLGIQKPNRTFIDSKLHNISPADIDTVVDSETLGRVKLAEIVDLYEKVYCNTIGAEHFYLVNDEEREWLQKKMESPEFLAPLPRGIKLRLFEKLFQADYFETFLAKKYVGKKRFSLEGGESFIPLLDTIVEEAGYHQMDGLVIGMAHRGRLNVLVNIIEKPASLIFAEFEEKTDKDNLSYADVKYHLGYSNSRMTTSGKEVKLSLAFNPSHLECVDPVVTGSVRARQTLIGDKDRSKYMPILIHGDAAFAGQGVVAETLNLMNLEGYTTGGTFHIVVNNQIGFTTLPDESRSTLYATDLAKGFQIPIIHVNGDDPEAVYRVVKLGMEYRQKFKKDFIIDLVCYRRLGHNETDEPAFTQPKMYAIIKNHPPTVKLYEKRLVEEGDIPQEDIDFIKNGSMHGLEDSFQRAKEQDVKIRVDTMQGVWSKFSKDSLDSEPATKLLAEQMHGIVQALTSVPQGFTPNSKLVKLLQSRKEMAEGKIPVDWGFAEALSFGSILESGFRIRLSGQDSQRGTFSHRHAVLVDTNTNEKYIPLNHISSKQAKAEIINSSLSEFSVLGFEYGYSLSDPNALVMWEAQFGDFANSAQVIFDQFISSSEVKWQRLSGLIMLLPHGYEGQGPEHSSARLERFLQLCALDNMQVCNLTTAAQYFHLLRRQMLRNYRKPLVIVTPKSLLRFPASLSPVEDILQGAFREILIDDSGSKPDKIEKVVFSAGKVYYDLMKYKDENKIKNVALVRVEQIYPFPAKEIQSSLKTFKNAKQFVWCQEEPKNQGAWFFVRERIEELLPGNARLVYAGRHESPSPAAGHMKLHLQEQDQLVLDAFQA.

It belongs to the alpha-ketoglutarate dehydrogenase family. In terms of assembly, homodimer. Part of the 2-oxoglutarate dehydrogenase (OGDH) complex composed of E1 (2-oxoglutarate dehydrogenase), E2 (dihydrolipoamide succinyltransferase) and E3 (dihydrolipoamide dehydrogenase); the complex contains multiple copies of the three enzymatic components (E1, E2 and E3). Thiamine diphosphate serves as cofactor.

The catalysed reaction is N(6)-[(R)-lipoyl]-L-lysyl-[protein] + 2-oxoglutarate + H(+) = N(6)-[(R)-S(8)-succinyldihydrolipoyl]-L-lysyl-[protein] + CO2. Its function is as follows. E1 component of the 2-oxoglutarate dehydrogenase (OGDH) complex which catalyzes the decarboxylation of 2-oxoglutarate, the first step in the conversion of 2-oxoglutarate to succinyl-CoA and CO(2). The protein is 2-oxoglutarate dehydrogenase E1 component of Leptospira interrogans serogroup Icterohaemorrhagiae serovar copenhageni (strain Fiocruz L1-130).